We begin with the raw amino-acid sequence, 1300 residues long: Serine protease EspP (1300 aa).

An N-terminal signal peptide occupies residues 1 to 55; it reads MNKIYSLKYSHITGGLIAVSELSGRVSSRATGKKKHKRILALCFLGLLQSSYSFA. Positions 57-311 constitute a Peptidase S6 domain; sequence QMDISNFYIR…NQTTIDNLKN (255 aa). Active-site charge relay system residues include histidine 127, aspartate 156, and serine 263. The Autotransporter domain occupies 1034-1300; that stretch reads DINGEAGAWA…AVNANFRYSF (267 aa).

In terms of processing, cleaved to release the mature protein from the outer membrane.

Its subcellular location is the periplasm. It is found in the secreted. The protein localises to the cell surface. It localises to the cell outer membrane. In terms of biological role, serine protease with cytotoxic effect. Disrupts actin cytoskeleton resulting cell detachment in vitro. In Escherichia coli, this protein is Serine protease EspP (espP).